The chain runs to 553 residues: Solute carrier family 22 member 4 (553 aa).

Residues 1–20 (MRDYDEVIAFLGEWGPFQRL) lie on the Cytoplasmic side of the membrane. The chain crosses the membrane as a helical span at residues 21–41 (IFFLLSASIIPNGFNGMSVVF). The Extracellular segment spans residues 42–142 (LAGTPEHRCL…NLVCEDDWKT (101 aa)). 3 N-linked (GlcNAc...) asparagine glycosylation sites follow: asparagine 57, asparagine 64, and asparagine 91. Residues 143 to 163 (PLTTSLFFVGVLCGSFVSGQL) traverse the membrane as a helical segment. Residues 164–171 (SDRFGRKK) lie on the Cytoplasmic side of the membrane. Residues 172-192 (VLFATMAVQTGFSFVQIFSTN) traverse the membrane as a helical segment. Residues 193–197 (WEMFT) are Extracellular-facing. Residues 198–218 (VLFAIVGMGQISNYVVAFILG) traverse the membrane as a helical segment. Residue 218–225 (GTEILSKS) coordinates ATP. Topologically, residues 219-232 (TEILSKSVRIIFST) are cytoplasmic. Residues 233-253 (LGVCTFFAIGYMVLPLFAYFI) form a helical membrane-spanning segment. Residues 254–257 (RDWR) lie on the Extracellular side of the membrane. The chain crosses the membrane as a helical span at residues 258–278 (MLLLALTLPGLFCVPLWWFIP). Residues 279-339 (ESPRWLISQR…IILDLFRTRN (61 aa)) lie on the Cytoplasmic side of the membrane. Residues 340–360 (IATITVMAVMLWMLTSVGYFA) traverse the membrane as a helical segment. Topologically, residues 361–373 (LSLNVPNLHGDVY) are extracellular. Residues 374-394 (LNCFLSGLIEVPAYFTAWLLL) traverse the membrane as a helical segment. The Cytoplasmic portion of the chain corresponds to 395-400 (RTLPRR). The helical transmembrane segment at 401–421 (YIIAGVLFWGGGVLLLIQVVP) threads the bilayer. Topologically, residues 422-428 (EDYNFVS) are extracellular. A helical membrane pass occupies residues 429–449 (IGLVMLGKFGITSAFSMLYVF). The Cytoplasmic portion of the chain corresponds to 450–462 (TAELYPTLVRNMA). A helical membrane pass occupies residues 463-483 (VGITSMASRVGSIIAPYFVYL). Topologically, residues 484 to 488 (GAYNR) are extracellular. The helical transmembrane segment at 489–509 (LLPYILMGSLTVLIGIITLFF) threads the bilayer. At 510 to 553 (PESFGVTLPENLEQMQKVRGFRCGKKSTVSVDREESPKVLITAF) the chain is on the cytoplasmic side.

It belongs to the major facilitator (TC 2.A.1) superfamily. Organic cation transporter (TC 2.A.1.19) family. As to quaternary structure, interacts with PDZK1. In terms of tissue distribution, expressed in kidney. Expressed in small intestines. Expressed in liver in non-parenchymal liver tissue such as sinusoidal vessels. Weakly expressed in lung and brain. Expressed in testis and spleen. Expressed in heart.

It is found in the apical cell membrane. The protein resides in the mitochondrion membrane. It localises to the basal cell membrane. The catalysed reaction is ergothioneine(out) + Na(+)(out) = ergothioneine(in) + Na(+)(in). It carries out the reaction acetylcholine(in) = acetylcholine(out). The enzyme catalyses (R)-carnitine(out) + Na(+)(out) = (R)-carnitine(in) + Na(+)(in). It catalyses the reaction glycine betaine(out) + Na(+)(out) = glycine betaine(in) + Na(+)(in). With respect to regulation, allosterically activated by intracellular ATP. Transporter that mediates the transport of endogenous and microbial zwitterions and organic cations. Functions as a Na(+)-dependent and pH-dependent high affinity microbial symporter of potent food-derived antioxidant ergothioeine. Transports one sodium ion with one ergothioeine molecule. Involved in the absorption of ergothioneine from the luminal/apical side of the small intestine and renal tubular cells, and into non-parenchymal liver cells, thereby contributing to maintain steady-state ergothioneine level in the body. Also mediates the bidirectional transport of acetycholine, although the exact transport mechanism has not been fully identified yet. Most likely exports anti-inflammatory acetylcholine in non-neuronal tissues, thereby contributing to the non-neuronal cholinergic system. Displays a general physiological role linked to better survival by controlling inflammation and oxidative stress, which may be related to ergothioneine and acetycholine transports. May also function as a low-affinity Na(+)-dependent transporter of L-carnitine through the mitochondrial membrane, thereby maintaining intracellular carnitine homeostasis. May contribute to regulate the transport of cationic compounds in testis across the blood-testis-barrier. The sequence is that of Solute carrier family 22 member 4 from Mus musculus (Mouse).